Here is a 333-residue protein sequence, read N- to C-terminus: Phospholipid phosphatase-related protein type 1 (333 aa).

The next 3 membrane-spanning stretches (helical) occupy residues 12-32, 66-86, and 126-146; these read IIPC…LLAY, FIQP…IIFV, and FIGV…AGQV. N162 carries an N-linked (GlcNAc...) asparagine glycan. The next 3 helical transmembrane spans lie at 200–217, 223–243, and 256–276; these read ASLS…ITST, SRLA…LTGL, and VVAG…CVVN.

The protein belongs to the PA-phosphatase related phosphoesterase family.

Its subcellular location is the cell membrane. The protein resides in the cell projection. It localises to the neuron projection. Its function is as follows. May play a role in neurite outgrowth and neurogenesis. The chain is Phospholipid phosphatase-related protein type 1 (plppr1) from Danio rerio (Zebrafish).